Reading from the N-terminus, the 553-residue chain is Dihydrolipoyllysine-residue acetyltransferase component of pyruvate dehydrogenase complex (553 aa).

Residues 4 to 78 (AIEIKVPDIG…SEGSVLVMLE (75 aa)) form the Lipoyl-binding 1 domain. An N6-lipoyllysine modification is found at K44. The segment at 97–118 (AAAAPAPAPAPAAAPAAAPAAG) is disordered. The Lipoyl-binding 2 domain occupies 122–196 (TIEVKVPDIG…AEGTLLLILE (75 aa)). The residue at position 162 (K162) is an N6-lipoyllysine. Positions 250–287 (HASPSVRKFARELGVDVSRVPGTGPKGRITQEDVQGYV) constitute a Peripheral subunit-binding (PSBD) domain. H526 is an active-site residue.

This sequence belongs to the 2-oxoacid dehydrogenase family. In terms of assembly, forms a 24-polypeptide structural core with octahedral symmetry. Requires (R)-lipoate as cofactor.

The enzyme catalyses N(6)-[(R)-dihydrolipoyl]-L-lysyl-[protein] + acetyl-CoA = N(6)-[(R)-S(8)-acetyldihydrolipoyl]-L-lysyl-[protein] + CoA. The pyruvate dehydrogenase complex catalyzes the overall conversion of pyruvate to acetyl-CoA and CO(2). It contains multiple copies of three enzymatic components: pyruvate dehydrogenase (E1), dihydrolipoamide acetyltransferase (E2) and lipoamide dehydrogenase (E3). This Cupriavidus necator (strain ATCC 17699 / DSM 428 / KCTC 22496 / NCIMB 10442 / H16 / Stanier 337) (Ralstonia eutropha) protein is Dihydrolipoyllysine-residue acetyltransferase component of pyruvate dehydrogenase complex (pdhB).